The sequence spans 233 residues: 2,3,4,5-tetrahydropyridine-2,6-dicarboxylate N-acetyltransferase (233 aa).

This sequence belongs to the transferase hexapeptide repeat family. DapH subfamily.

The enzyme catalyses (S)-2,3,4,5-tetrahydrodipicolinate + acetyl-CoA + H2O = L-2-acetamido-6-oxoheptanedioate + CoA. The protein operates within amino-acid biosynthesis; L-lysine biosynthesis via DAP pathway; LL-2,6-diaminopimelate from (S)-tetrahydrodipicolinate (acetylase route): step 1/3. Catalyzes the transfer of an acetyl group from acetyl-CoA to tetrahydrodipicolinate. The protein is 2,3,4,5-tetrahydropyridine-2,6-dicarboxylate N-acetyltransferase of Petrotoga mobilis (strain DSM 10674 / SJ95).